The primary structure comprises 316 residues: Beta-ketoacyl-[acyl-carrier-protein] synthase III (316 aa).

Catalysis depends on residues Cys112 and His243. An ACP-binding region spans residues 244–248 (QANLR). Residue Asn273 is part of the active site.

It belongs to the thiolase-like superfamily. FabH family. As to quaternary structure, homodimer.

It is found in the cytoplasm. The enzyme catalyses malonyl-[ACP] + acetyl-CoA + H(+) = 3-oxobutanoyl-[ACP] + CO2 + CoA. It participates in lipid metabolism; fatty acid biosynthesis. Catalyzes the condensation reaction of fatty acid synthesis by the addition to an acyl acceptor of two carbons from malonyl-ACP. Catalyzes the first condensation reaction which initiates fatty acid synthesis and may therefore play a role in governing the total rate of fatty acid production. Possesses both acetoacetyl-ACP synthase and acetyl transacylase activities. Its substrate specificity determines the biosynthesis of branched-chain and/or straight-chain of fatty acids. The polypeptide is Beta-ketoacyl-[acyl-carrier-protein] synthase III (Yersinia pestis (strain Pestoides F)).